The sequence spans 338 residues: Egl nine homolog 1 (338 aa).

Residues 1–11 (PRAQPAPAQPR) show a composition bias toward low complexity. The tract at residues 1-99 (PRAQPAPAQP…PSGGLRPNGQ (99 aa)) is disordered. S52 bears the Phosphoserine mark. Residues C116 and C123 each carry the S-nitrosocysteine modification. The beta(2)beta(3) 'finger-like' loop stretch occupies residues 156–166 (VSQKSDSSKDI). A Fe2OG dioxygenase domain is found at 209-307 (GRTKAMVACY…RYAITVWYFD (99 aa)). C217 carries the S-nitrosocysteine modification. Residues H228 and D230 each contribute to the Fe cation site. S-nitrosocysteine occurs at positions 238 and 241. H289 is a binding site for Fe cation. 2-oxoglutarate is bound at residue R298.

In terms of assembly, monomer. Interacts with ING4; the interaction inhibits the hydroxylation of HIF alpha proteins. Interacts with PTGES3 (via PXLE motif); thereby recruiting EGLN1 to the HSP90 pathway to facilitate HIF alpha proteins hydroxylation. Interacts with LIMD1. Found in a complex composed of LIMD1, VHL, EGLN1/PHD2, ELOB and CUL2. Interacts with EPAS1. Interacts with CBFA2T3 and HIF1A. It depends on Fe(2+) as a cofactor. L-ascorbate serves as cofactor. S-nitrosylation inhibits the enzyme activity up to 60% under aerobic conditions. Chelation of Fe(2+) has no effect on the S-nitrosylation. It is uncertain whether nitrosylation occurs on Cys-238 or Cys-241. Expressed in heart, liver, kidney, brain, liver and testis. Highest levels in heart, lowest in liver.

It is found in the cytoplasm. Its subcellular location is the nucleus. It carries out the reaction L-prolyl-[hypoxia-inducible factor alpha subunit] + 2-oxoglutarate + O2 = trans-4-hydroxy-L-prolyl-[hypoxia-inducible factor alpha subunit] + succinate + CO2. Its activity is regulated as follows. Increased activation in hypoxia. Hydroxylation of the C-terminal ODD domain (CODD) proline of HIF1A is activated by cyclosporin A (CsA). Cellular oxygen sensor that catalyzes, under normoxic conditions, the post-translational formation of 4-hydroxyproline in hypoxia-inducible factor (HIF) alpha proteins. Hydroxylates a specific proline found in each of the oxygen-dependent degradation (ODD) domains (N-terminal, NODD, and C-terminal, CODD) of HIF1A. Also hydroxylates HIF2A. Has a preference for the CODD site for both HIF1A and HIF1B. Hydroxylated HIFs are then targeted for proteasomal degradation via the von Hippel-Lindau ubiquitination complex. Under hypoxic conditions, the hydroxylation reaction is attenuated allowing HIFs to escape degradation resulting in their translocation to the nucleus, heterodimerization with HIF1B, and increased expression of hypoxy-inducible genes. EGLN1 is the most important isozyme under normoxia and, through regulating the stability of HIF1, involved in various hypoxia-influenced processes such as angiogenesis in retinal and cardiac functionality. Target proteins are preferentially recognized via a LXXLAP motif. The chain is Egl nine homolog 1 (Egln1) from Rattus norvegicus (Rat).